A 464-amino-acid chain; its full sequence is Argininosuccinate lyase (464 aa).

An N-acetylalanine modification is found at Ala-2. An N6-acetyllysine modification is found at Lys-7. 2-(N(omega)-L-arginino)succinate is bound at residue Ser-27. N6-acetyllysine is present on Lys-69. 2-(N(omega)-L-arginino)succinate-binding residues include Asn-114 and Thr-159. The active-site Proton acceptor is His-160. Ser-281 (proton donor) is an active-site residue. An N6-acetyllysine modification is found at Lys-288. 2-(N(omega)-L-arginino)succinate-binding residues include Asn-289, Tyr-321, Gln-326, and Lys-329.

The protein belongs to the lyase 1 family. Argininosuccinate lyase subfamily. In terms of assembly, homotetramer. Forms tissue-specific complexes with ASS1, SLC7A1, HSP90AA1 and nitric oxide synthase NOS1, NOS2 or NOS3; the complex maintenance is independent of ASL catalytic function. In terms of processing, acetylation modifies enzyme activity in response to alterations of extracellular nutrient availability. Acetylation increased with trichostin A (TSA) or with nicotinamide (NAM). Glucose increases acetylation by about a factor of 3 with decreasing enzyme activity. Acetylation on Lys-288 is decreased on the addition of extra amino acids resulting in activation of enzyme activity. In terms of tissue distribution, expressed in lung and brain (at protein level).

The enzyme catalyses 2-(N(omega)-L-arginino)succinate = fumarate + L-arginine. Its pathway is amino-acid biosynthesis; L-arginine biosynthesis; L-arginine from L-ornithine and carbamoyl phosphate: step 3/3. It participates in nitrogen metabolism; urea cycle; L-arginine and fumarate from (N(omega)-L-arginino)succinate: step 1/1. Enzyme activity is regulated by acetylation. Functionally, catalyzes the reversible cleavage of L-argininosuccinate to fumarate and L-arginine, an intermediate step reaction in the urea cycle mostly providing for hepatic nitrogen detoxification into excretable urea as well as de novo L-arginine synthesis in nonhepatic tissues. Essential regulator of intracellular and extracellular L-arginine pools. As part of citrulline-nitric oxide cycle, forms tissue-specific multiprotein complexes with argininosuccinate synthase ASS1, transport protein SLC7A1 and nitric oxide synthase NOS1, NOS2 or NOS3, allowing for cell-autonomous L-arginine synthesis while channeling extracellular L-arginine to nitric oxide synthesis pathway. This chain is Argininosuccinate lyase (Asl), found in Mus musculus (Mouse).